The following is a 328-amino-acid chain: Probable cell division protein WhiA (328 aa).

Residues 275 to 308 constitute a DNA-binding region (H-T-H motif); the sequence is SLEELGQLASPPMTKDAVAGRIRRLLSMADKRAE.

This sequence belongs to the WhiA family.

In terms of biological role, involved in cell division and chromosome segregation. This chain is Probable cell division protein WhiA, found in Corynebacterium urealyticum (strain ATCC 43042 / DSM 7109).